A 436-amino-acid chain; its full sequence is MEKTSFSHDTNKVFLIAGMQWGDEGKGKAVVTFSEKVDIVAKYNGGHNAGHEIILNGQQYKLHLIPGGVMHPHVINVLGHGMVIHLESLLKEMEILTQHGIEVLERLRISDRAHILLNAHVDIDRKMEHRRMSGGGKIGTTLRGIGPCYSTKSARTGIRMGDLLHWEHFSKKVRDFYKIHCDFENFEELAQEEVENHKKLYDIFAKCICDTGYFMSESIKAGKKILLEGSNGSLLDIDMGTYPFVTSSTTLACGAYLGLGVPLNAPIYRIGILKCYQTRVGMGPFPTEFFDDNYTHIQKDGTEIGVSTARVRRCGWLDLVAARYIQRLNCFNSIYFTKMDVLTGLKEIKICIDYRNKVDGTILERGRFPSTIASLEEYEPVYQSFAGWDQDISQISEYNELPETARKYIEFVEKEVGAHFQWVGVGQDVKSIIVRS.

GTP contacts are provided by residues Gly22–Lys28 and Gly50–Glu52. Asp23 serves as the catalytic Proton acceptor. Residues Asp23 and Gly50 each contribute to the Mg(2+) site. IMP is bound by residues Asp23–Lys26, Asn48–His51, Thr141, Arg155, Asn231, Thr246, and Arg310. The active-site Proton donor is His51. Position 306–312 (Val306–Arg312) interacts with substrate. Residues Arg312, Lys338–Asp340, and Gly424–Gly426 each bind GTP.

This sequence belongs to the adenylosuccinate synthetase family. Homodimer. Mg(2+) is required as a cofactor.

It localises to the cytoplasm. The enzyme catalyses IMP + L-aspartate + GTP = N(6)-(1,2-dicarboxyethyl)-AMP + GDP + phosphate + 2 H(+). The protein operates within purine metabolism; AMP biosynthesis via de novo pathway; AMP from IMP: step 1/2. Plays an important role in the salvage pathway for purine nucleotide biosynthesis. Catalyzes the first committed step in the biosynthesis of AMP from IMP. In Babesia bovis, this protein is Adenylosuccinate synthetase.